The sequence spans 412 residues: Serine hydroxymethyltransferase (412 aa).

(6S)-5,6,7,8-tetrahydrofolate contacts are provided by residues leucine 117 and glycine 121–leucine 123. Lysine 226 is modified (N6-(pyridoxal phosphate)lysine).

This sequence belongs to the SHMT family. Homodimer. Requires pyridoxal 5'-phosphate as cofactor.

The protein localises to the cytoplasm. It carries out the reaction (6R)-5,10-methylene-5,6,7,8-tetrahydrofolate + glycine + H2O = (6S)-5,6,7,8-tetrahydrofolate + L-serine. Its pathway is one-carbon metabolism; tetrahydrofolate interconversion. It functions in the pathway amino-acid biosynthesis; glycine biosynthesis; glycine from L-serine: step 1/1. Functionally, catalyzes the reversible interconversion of serine and glycine with tetrahydrofolate (THF) serving as the one-carbon carrier. This reaction serves as the major source of one-carbon groups required for the biosynthesis of purines, thymidylate, methionine, and other important biomolecules. Also exhibits THF-independent aldolase activity toward beta-hydroxyamino acids, producing glycine and aldehydes, via a retro-aldol mechanism. The sequence is that of Serine hydroxymethyltransferase from Staphylococcus aureus (strain bovine RF122 / ET3-1).